A 353-amino-acid polypeptide reads, in one-letter code: UPF0283 membrane protein YcjF (353 aa).

The segment at 16 to 35 is disordered; it reads KEESTSAFKAQQTFSEAESR. Residues 20–31 are compositionally biased toward polar residues; the sequence is TSAFKAQQTFSE. Transmembrane regions (helical) follow at residues 70 to 90, 100 to 120, and 213 to 233; these read MVMG…VQWT, VALG…GSVV, and ESTL…FIAW.

Belongs to the UPF0283 family.

It is found in the cell inner membrane. The polypeptide is UPF0283 membrane protein YcjF (Salmonella heidelberg (strain SL476)).